The primary structure comprises 649 residues: Ubiquitin-associated and SH3 domain-containing protein B (649 aa).

Ser20 carries the post-translational modification Phosphoserine. At Thr23 the chain carries Phosphothreonine. Residues 27–76 form the UBA domain; it reads NRQQRPGTIKHGSALDVLLSMGFPRARAQKALASTGGRSVQAACDWLFSH. The SH3 domain maps to 254 to 319; sequence ANHETLQVIY…PENYITKADE (66 aa). The segment at 380–649 is protein tyrosine phosphatase; that stretch reads GPQKRCLFVC…FNWRETLLQE (270 aa). Arg390 is an active-site residue. His391 serves as the catalytic Tele-phosphohistidine intermediate. His576 is a catalytic residue.

In terms of assembly, homodimer. Interacts with JAK2 (in vitro). Interacts with CBL. Part of a complex containing CBL and activated EGFR. Interacts with ubiquitin and with mono-ubiquitinated proteins. Interacts with ZAP70 (ubiquitinated form).

The protein resides in the cytoplasm. The protein localises to the nucleus. It carries out the reaction O-phospho-L-tyrosyl-[protein] + H2O = L-tyrosyl-[protein] + phosphate. Its function is as follows. Interferes with CBL-mediated down-regulation and degradation of receptor-type tyrosine kinases. Promotes accumulation of activated target receptors, such as T-cell receptors and EGFR, on the cell surface. Exhibits tyrosine phosphatase activity toward several substrates including EGFR, FAK, SYK, and ZAP70. Down-regulates proteins that are dually modified by both protein tyrosine phosphorylation and ubiquitination. This Homo sapiens (Human) protein is Ubiquitin-associated and SH3 domain-containing protein B (UBASH3B).